A 591-amino-acid polypeptide reads, in one-letter code: Heterogeneous nuclear ribonucleoprotein L-like (591 aa).

The disordered stretch occupies residues 1–120 (MSSSSSSSPK…STEGGGSHHK (120 aa)). Positions 20-31 (FESQAKRLKTEE) are enriched in basic and acidic residues. K28 is covalently cross-linked (Glycyl lysine isopeptide (Lys-Gly) (interchain with G-Cter in SUMO2)). A Phosphoserine modification is found at S37. Phosphothreonine is present on T48. The span at 57–73 (SGGGDGGDGDGGSGGGG) shows a compositional bias: gly residues. Positions 74–91 (DGEEGEGGEEGDEGDGDE) are enriched in acidic residues. Positions 92–105 (GGSGGDEGGSGGGP) are enriched in gly residues. A phosphoserine mark is found at S107, S117, and S124. RRM domains lie at 125–199 (PVVH…YSTS), 215–293 (NKVL…YARP), and 384–458 (SVVM…VSKQ). K540 is covalently cross-linked (Glycyl lysine isopeptide (Lys-Gly) (interchain with G-Cter in SUMO2)).

In terms of assembly, interacts with HNRNPL.

In terms of biological role, RNA-binding protein that functions as a regulator of alternative splicing for multiple target mRNAs, including PTPRC/CD45 and STAT5A. Required for alternative splicing of PTPRC. The chain is Heterogeneous nuclear ribonucleoprotein L-like (Hnrnpll) from Mus musculus (Mouse).